The following is a 127-amino-acid chain: ATP synthase epsilon chain (127 aa).

This sequence belongs to the ATPase epsilon chain family. As to quaternary structure, F-type ATPases have 2 components, CF(1) - the catalytic core - and CF(0) - the membrane proton channel. CF(1) has five subunits: alpha(3), beta(3), gamma(1), delta(1), epsilon(1). CF(0) has three main subunits: a, b and c.

The protein localises to the cell inner membrane. Produces ATP from ADP in the presence of a proton gradient across the membrane. This Leptospira interrogans serogroup Icterohaemorrhagiae serovar copenhageni (strain Fiocruz L1-130) protein is ATP synthase epsilon chain.